The primary structure comprises 360 residues: RGG repeats nuclear RNA binding protein B (360 aa).

2 disordered regions span residues M1–M216 and M250–K360. An N-acetylalanine modification is found at A2. Positions P58–G77 are enriched in gly residues. 2 stretches are compositionally biased toward basic and acidic residues: residues R99 to R108 and D132 to A157. Residues W162–S176 show a composition bias toward polar residues. Basic and acidic residues-rich tracts occupy residues L184–M216, S258–R283, and R311–R336. The FF domain maps to K223–I288. S258 carries the post-translational modification Phosphoserine.

The protein belongs to the SERBP1-HABP4 family.

The protein localises to the nucleus. It is found in the cytoplasm. Its subcellular location is the perinuclear region. Its function is as follows. Ribosome-binding protein that acts as a regulator of mRNA translation by promoting ribosome inactivation. Binds RNA. This chain is RGG repeats nuclear RNA binding protein B, found in Arabidopsis thaliana (Mouse-ear cress).